A 450-amino-acid polypeptide reads, in one-letter code: Chromosomal replication initiator protein DnaA (450 aa).

The segment at 1–84 (MENIHDLWDR…AVKFIIPPNQ (84 aa)) is domain I, interacts with DnaA modulators. A domain II region spans residues 84–111 (QDDEELEFQSSKKKQRKPYEETNDFPQS). Residues 89 to 108 (LEFQSSKKKQRKPYEETNDF) are disordered. Positions 112–328 (MLNPKYTFDT…GALIRVVAYS (217 aa)) are domain III, AAA+ region. Glycine 156, glycine 158, lysine 159, and threonine 160 together coordinate ATP. The tract at residues 329-450 (SLINKEITAD…QEIQEKLKQL (122 aa)) is domain IV, binds dsDNA.

The protein belongs to the DnaA family. Oligomerizes as a right-handed, spiral filament on DNA at oriC.

It localises to the cytoplasm. Its function is as follows. Plays an essential role in the initiation and regulation of chromosomal replication. ATP-DnaA binds to the origin of replication (oriC) to initiate formation of the DNA replication initiation complex once per cell cycle. Binds the DnaA box (a 9 base pair repeat at the origin) and separates the double-stranded (ds)DNA. Forms a right-handed helical filament on oriC DNA; dsDNA binds to the exterior of the filament while single-stranded (ss)DNA is stabiized in the filament's interior. The ATP-DnaA-oriC complex binds and stabilizes one strand of the AT-rich DNA unwinding element (DUE), permitting loading of DNA polymerase. After initiation quickly degrades to an ADP-DnaA complex that is not apt for DNA replication. Binds acidic phospholipids. The chain is Chromosomal replication initiator protein DnaA from Geobacillus kaustophilus (strain HTA426).